The primary structure comprises 452 residues: Sulfide:quinone oxidoreductase, mitochondrial (452 aa).

FAD is bound by residues 54–55, Glu77, Gln85, and Val120; that span reads AG. Cys204 serves as the catalytic Cysteine persulfide intermediate. Cys204 and Cys380 are oxidised to a cystine. FAD is bound by residues Asp337 and 345 to 348; that span reads KTAA. Catalysis depends on Cys380, which acts as the Cysteine persulfide intermediate.

This sequence belongs to the SQRD family. The cofactor is FAD.

The protein localises to the mitochondrion. The enzyme catalyses ubiquinone-10 + hydrogen sulfide + sulfite + 2 H(+) = ubiquinol-10 + thiosulfate. It catalyses the reaction a quinone + hydrogen sulfide + glutathione + H(+) = S-sulfanylglutathione + a quinol. Catalyzes the oxidation of hydrogen sulfide, with the help of a quinone. The sequence is that of Sulfide:quinone oxidoreductase, mitochondrial from Dictyostelium discoideum (Social amoeba).